The primary structure comprises 508 residues: Proline--tRNA ligase 2 (508 aa).

The protein belongs to the class-II aminoacyl-tRNA synthetase family. ProS type 3 subfamily. As to quaternary structure, homodimer.

It is found in the cytoplasm. It carries out the reaction tRNA(Pro) + L-proline + ATP = L-prolyl-tRNA(Pro) + AMP + diphosphate. In terms of biological role, catalyzes the attachment of proline to tRNA(Pro) in a two-step reaction: proline is first activated by ATP to form Pro-AMP and then transferred to the acceptor end of tRNA(Pro). In Bacillus anthracis, this protein is Proline--tRNA ligase 2.